We begin with the raw amino-acid sequence, 162 residues long: Large ribosomal subunit protein uL15 (162 aa).

The tract at residues 1-41 (MKLSDIADNAGSRKKRMRVGRGIGSGKGKTAGRGGKGQTAR) is disordered. The span at 21–37 (RGIGSGKGKTAGRGGKG) shows a compositional bias: gly residues.

This sequence belongs to the universal ribosomal protein uL15 family. Part of the 50S ribosomal subunit.

Binds to the 23S rRNA. The polypeptide is Large ribosomal subunit protein uL15 (Rhodopseudomonas palustris (strain BisB18)).